The chain runs to 231 residues: 5'-methylthioadenosine/S-adenosylhomocysteine nucleosidase (231 aa).

The Proton acceptor role is filled by Glu-12. Substrate-binding positions include Gly-78, Val-153, and 174-175 (ME). Asp-198 acts as the Proton donor in catalysis.

It belongs to the PNP/UDP phosphorylase family. MtnN subfamily.

It carries out the reaction S-adenosyl-L-homocysteine + H2O = S-(5-deoxy-D-ribos-5-yl)-L-homocysteine + adenine. The enzyme catalyses S-methyl-5'-thioadenosine + H2O = 5-(methylsulfanyl)-D-ribose + adenine. The catalysed reaction is 5'-deoxyadenosine + H2O = 5-deoxy-D-ribose + adenine. It functions in the pathway amino-acid biosynthesis; L-methionine biosynthesis via salvage pathway; S-methyl-5-thio-alpha-D-ribose 1-phosphate from S-methyl-5'-thioadenosine (hydrolase route): step 1/2. Catalyzes the irreversible cleavage of the glycosidic bond in both 5'-methylthioadenosine (MTA) and S-adenosylhomocysteine (SAH/AdoHcy) to adenine and the corresponding thioribose, 5'-methylthioribose and S-ribosylhomocysteine, respectively. Also cleaves 5'-deoxyadenosine, a toxic by-product of radical S-adenosylmethionine (SAM) enzymes, into 5-deoxyribose and adenine. This Vibrio cholerae serotype O1 (strain ATCC 39315 / El Tor Inaba N16961) protein is 5'-methylthioadenosine/S-adenosylhomocysteine nucleosidase.